A 330-amino-acid polypeptide reads, in one-letter code: Protein LEG1 homolog (330 aa).

The signal sequence occupies residues M1–A20. N24 and N69 each carry an N-linked (GlcNAc...) asparagine glycan.

The protein belongs to the LEG1 family. As to expression, detected in saliva and in hypomineralized dental enamel (at protein level).

Its subcellular location is the secreted. In terms of biological role, may be involved in early liver development. The protein is Protein LEG1 homolog of Homo sapiens (Human).